The chain runs to 432 residues: Glutamyl-tRNA reductase (432 aa).

Substrate contacts are provided by residues 49–52 (TCNR), Ser-109, 114–116 (EGQ), and Gln-120. The active-site Nucleophile is the Cys-50. NADP(+) is bound at residue 198–203 (GAGRMS).

It belongs to the glutamyl-tRNA reductase family. In terms of assembly, homodimer.

The enzyme catalyses (S)-4-amino-5-oxopentanoate + tRNA(Glu) + NADP(+) = L-glutamyl-tRNA(Glu) + NADPH + H(+). It functions in the pathway porphyrin-containing compound metabolism; protoporphyrin-IX biosynthesis; 5-aminolevulinate from L-glutamyl-tRNA(Glu): step 1/2. Its pathway is porphyrin-containing compound metabolism; chlorophyll biosynthesis. Functionally, catalyzes the NADPH-dependent reduction of glutamyl-tRNA(Glu) to glutamate 1-semialdehyde (GSA). The sequence is that of Glutamyl-tRNA reductase from Synechococcus sp. (strain CC9902).